A 726-amino-acid polypeptide reads, in one-letter code: Bromodomain-containing protein 3 (726 aa).

The tract at residues 1–35 (MSTATTVAPAGIPATPGPVNPPPPEVSNPSKPGRK) is disordered. At S2 the chain carries N-acetylserine. Over residues 15 to 26 (TPGPVNPPPPEV) the composition is skewed to pro residues. The 107-residue stretch at 34 to 140 (RKTNQLQYMQ…KIFLQKVAQM (107 aa)) folds into the Bromo 1 domain. The interval 78–80 (KNP) is acetylated histone H3 binding. Disordered regions lie at residues 149–169 (PPAPKGKGRKPAAGAQSAGTQ) and 237–305 (VKKK…AGKK). The segment covering 248–261 (TTTPTTSAITASRS) has biased composition (low complexity). S263 and S281 each carry phosphoserine. The Bromo 2 domain occupies 306 to 415 (GKLSEHLRYC…DVFEMRFAKM (110 aa)). K414 participates in a covalent cross-link: Glycyl lysine isopeptide (Lys-Gly) (interchain with G-Cter in SUMO2). Disordered regions lie at residues 421–462 (EAPA…RATR), 477–575 (LAAL…MSYD), and 637–726 (LQKK…SDSE). A coiled-coil region spans residues 453–524 (SDSEEERATR…AEEEKKAKVA (72 aa)). Residues 487-503 (KPKKKKEKKEKEKKKKD) show a composition bias toward basic residues. Over residues 504–521 (KEKEKEKHKVKAEEEKKA) the composition is skewed to basic and acidic residues. Positions 523-540 (VAPPAKQAQQKKAPAKKA) are enriched in low complexity. Positions 562–644 (DSEEEEEGLP…SCLQKKQRKP (83 aa)) constitute an NET domain. S563 is modified (phosphoserine). Positions 645-684 (FSASGKKQAAKSKEELAQEKKKELEKRLQDVSGQLSSSKK) form a coiled coil. Residues 655-673 (KSKEELAQEKKKELEKRLQ) are compositionally biased toward basic and acidic residues. Positions 692 to 726 (GSAPSGGPSRLSSSSSSESGSSSSSGSSSDSSDSE) are enriched in low complexity.

Belongs to the BET family. Interacts (via bromo domain 1) with GATA1 acetylated at 'Lys-312' and 'Lys-315'. Interacts (via bromo domain 1) with GATA2 acetylated on lysine residues. Interacts (via NET domain) with CHD4 (via KIKL motif). Interacts (via NET domain) with SMARCA4 (via KIKL motif). Interacts (via NET domain) with NSD3 (via KIKL motif). In terms of assembly, (Microbial infection) Interacts with the Integrase protein of Moloney murine leukemia virus (MLV). As to expression, ubiquitous.

Its subcellular location is the nucleus. It localises to the chromosome. Its activity is regulated as follows. Inhibited by JQ1, a thieno-triazolo-1,4-diazepine derivative, which specifically inhibits members of the BET family (BRD2, BRD3 and BRD4). The first bromo domain is inhibited by GSK778 (iBET-BD1), which specifically inhibits the first bromo domain of members of the BET family (BRD2, BRD3 and BRD4). The second bromo domain is inhibited by ABBV-744, which specifically inhibits the second bromo domain of members of the BET family (BRD2, BRD3 and BRD4). The second bromo domain is inhibited by GSK046 (iBET-BD2), which specifically inhibits the second bromo domain of members of the BET family (BRD2, BRD3 and BRD4). Chromatin reader that recognizes and binds acetylated histones, thereby controlling gene expression and remodeling chromatin structures. Recruits transcription factors and coactivators to target gene sites, and activates RNA polymerase II machinery for transcriptional elongation. In vitro, binds acetylated lysine residues on the N-terminus of histone H2A, H2B, H3 and H4. Involved in endoderm differentiation via its association with long non-coding RNA (lncRNA) DIGIT: BRD3 undergoes liquid-liquid phase separation upon binding to lncRNA DIGIT, promoting binding to histone H3 acetylated at 'Lys-18' (H3K18ac) to induce endoderm gene expression. Also binds non-histones acetylated proteins, such as GATA1 and GATA2: regulates transcription by promoting the binding of the transcription factor GATA1 to its targets. In Homo sapiens (Human), this protein is Bromodomain-containing protein 3.